Reading from the N-terminus, the 176-residue chain is Ribosome maturation factor RimM (176 aa).

Positions 94–176 constitute a PRC barrel domain; the sequence is KDEFFYFEIL…RFGFEILQNS (83 aa).

The protein belongs to the RimM family. Binds ribosomal protein uS19.

It localises to the cytoplasm. In terms of biological role, an accessory protein needed during the final step in the assembly of 30S ribosomal subunit, possibly for assembly of the head region. Essential for efficient processing of 16S rRNA. May be needed both before and after RbfA during the maturation of 16S rRNA. It has affinity for free ribosomal 30S subunits but not for 70S ribosomes. The chain is Ribosome maturation factor RimM from Campylobacter hominis (strain ATCC BAA-381 / DSM 21671 / CCUG 45161 / LMG 19568 / NCTC 13146 / CH001A).